The chain runs to 682 residues: Potassium-transporting ATPase ATP-binding subunit (682 aa).

4 consecutive transmembrane segments (helical) span residues 34-54 (PVMF…IAMA), 62-82 (ALFS…ANFA), 219-239 (IALT…TATL), and 254-274 (VLVA…LSAI). Catalysis depends on aspartate 307, which acts as the 4-aspartylphosphate intermediate. Residues aspartate 344, glutamate 348, 377 to 384 (FTAQSRMS), and lysine 395 contribute to the ATP site. The Mg(2+) site is built by aspartate 518 and aspartate 522. 3 helical membrane-spanning segments follow: residues 588-608 (FAII…LNIM), 616-636 (AILS…PLAL), and 656-676 (IYGL…DLLL).

The protein belongs to the cation transport ATPase (P-type) (TC 3.A.3) family. Type IA subfamily. The system is composed of three essential subunits: KdpA, KdpB and KdpC.

It is found in the cell inner membrane. The enzyme catalyses K(+)(out) + ATP + H2O = K(+)(in) + ADP + phosphate + H(+). Functionally, part of the high-affinity ATP-driven potassium transport (or Kdp) system, which catalyzes the hydrolysis of ATP coupled with the electrogenic transport of potassium into the cytoplasm. This subunit is responsible for energy coupling to the transport system and for the release of the potassium ions to the cytoplasm. In Escherichia coli O157:H7 (strain EC4115 / EHEC), this protein is Potassium-transporting ATPase ATP-binding subunit.